The chain runs to 179 residues: Cell division protein ZapC (179 aa).

It belongs to the ZapC family. In terms of assembly, interacts directly with FtsZ.

It localises to the cytoplasm. Functionally, contributes to the efficiency of the cell division process by stabilizing the polymeric form of the cell division protein FtsZ. Acts by promoting interactions between FtsZ protofilaments and suppressing the GTPase activity of FtsZ. This is Cell division protein ZapC from Aliivibrio salmonicida (strain LFI1238) (Vibrio salmonicida (strain LFI1238)).